Consider the following 397-residue polypeptide: Tryptophan synthase beta chain (397 aa).

N6-(pyridoxal phosphate)lysine is present on lysine 87.

The protein belongs to the TrpB family. As to quaternary structure, tetramer of two alpha and two beta chains. It depends on pyridoxal 5'-phosphate as a cofactor.

It catalyses the reaction (1S,2R)-1-C-(indol-3-yl)glycerol 3-phosphate + L-serine = D-glyceraldehyde 3-phosphate + L-tryptophan + H2O. It participates in amino-acid biosynthesis; L-tryptophan biosynthesis; L-tryptophan from chorismate: step 5/5. In terms of biological role, the beta subunit is responsible for the synthesis of L-tryptophan from indole and L-serine. The chain is Tryptophan synthase beta chain from Escherichia coli O139:H28 (strain E24377A / ETEC).